Reading from the N-terminus, the 188-residue chain is Small ribosomal subunit protein uS7 (188 aa).

It belongs to the universal ribosomal protein uS7 family. Part of the 30S ribosomal subunit.

In terms of biological role, one of the primary rRNA binding proteins, it binds directly to 16S rRNA where it nucleates assembly of the head domain of the 30S subunit. Is located at the subunit interface close to the decoding center. The sequence is that of Small ribosomal subunit protein uS7 from Methanococcus maripaludis (strain DSM 14266 / JCM 13030 / NBRC 101832 / S2 / LL).